A 401-amino-acid polypeptide reads, in one-letter code: E3 ubiquitin-protein ligase RGLG4 (401 aa).

A disordered region spans residues 1-43; sequence MTMGNFLKRFGSGKSRSSRNMTLGTTSSQSHEPSPSDPSLSLA. Residues 8–19 show a composition bias toward low complexity; sequence KRFGSGKSRSSR. Polar residues predominate over residues 20-32; sequence NMTLGTTSSQSHE. One can recognise a VWFA domain in the interval 79–299; it reads NLILGVDFTK…KETAFALAAL (221 aa). The disordered stretch occupies residues 326–350; it reads VPRPPPIPYTPPTNAELPSTASPAS. Positions 327 to 336 are enriched in pro residues; the sequence is PRPPPIPYTP. A compositionally biased stretch (polar residues) spans 341–350; that stretch reads ELPSTASPAS. The segment at 357 to 390 adopts an RING-type zinc-finger fold; sequence CPICLTNRKDVAFSCGHMTCGDCGSKISNCPICR.

In terms of assembly, interacts with UBC30, GRXS17 and GLB3. Widely expressed.

Its subcellular location is the cytoplasm. The protein resides in the nucleus. The enzyme catalyses S-ubiquitinyl-[E2 ubiquitin-conjugating enzyme]-L-cysteine + [acceptor protein]-L-lysine = [E2 ubiquitin-conjugating enzyme]-L-cysteine + N(6)-ubiquitinyl-[acceptor protein]-L-lysine.. In terms of biological role, possesses E3 ubiquitin-protein ligase in vitro. Acts as upstream modulator of jasmonate (JA) signaling in response to various stimuli, such as JA-inhibited root growth, JA-inductive gene expression, coronatine-mediated pathogen susceptibility, wound-stimulated expression of JA-responsive genes and wound-induced JA biosynthesis. Controls fumonisin B1 (FB1)-triggered programmed cell death (PCD) by modulating the JA signaling pathway. May mediate salicylic acid (SA) suppression of JA signaling in FB1-induced responses. May mediate the formation of 'Lys-48'-linked multiubiquitin chains. Mediates the polyubiquitination and subsequent proteasomal degradation of the target protein GRXS17. This chain is E3 ubiquitin-protein ligase RGLG4, found in Arabidopsis thaliana (Mouse-ear cress).